Here is a 205-residue protein sequence, read N- to C-terminus: MGAYKYLQELYKKKQSDAVRFLLRVRCWEYRNLPVCHRASHPTRVDKARRLGYKATQGFVVYRIRVRRGGRKRQVPGGRTGGKPKTHGVNELKPSRNLRSVAEERVGRRCPNLRVLNSYWVNQDSTYKYYEVILVDNSHNAIRNDPRYNWICKPVHKHRELRGLTSAGIKARGLRRKGTHRASKTRPSRQANYKRRNTVVFHRYR.

Disordered regions lie at residues 70-90 (GRKRQVPGGRTGGKPKTHGVN) and 172-197 (RGLRRKGTHRASKTRPSRQANYKRRN).

It belongs to the eukaryotic ribosomal protein eL15 family.

The sequence is that of Large ribosomal subunit protein eL15 (rpl15-1) from Dictyostelium discoideum (Social amoeba).